Here is a 123-residue protein sequence, read N- to C-terminus: MPTIQQLIRNSRQPAENRTKSPALRACPQRRGVCTRVYTTTPKKPNSALRKVARVRLTSGFEVTAYIPGIGHNLQEHSVILVRGGRVKDLPGVRYHIVRGTLDAVGVKDRRQGRSKYGVKRPK.

A compositionally biased stretch (polar residues) spans 1-16 (MPTIQQLIRNSRQPAE). Residues 1–23 (MPTIQQLIRNSRQPAENRTKSPA) form a disordered region.

The protein belongs to the universal ribosomal protein uS12 family. As to quaternary structure, part of the 30S ribosomal subunit.

The protein localises to the plastid. Its subcellular location is the chloroplast. Functionally, with S4 and S5 plays an important role in translational accuracy. Located at the interface of the 30S and 50S subunits. The chain is Small ribosomal subunit protein uS12c (rps12) from Staurastrum punctulatum (Green alga).